An 82-amino-acid chain; its full sequence is Protein CYSTEINE-RICH TRANSMEMBRANE MODULE 13 (82 aa).

Residues 1 to 58 (MYHQEQHPVGAPPPQGYPPKDGYPPAGYPPAGYPPPGYAQGYPAQGYPPPQYSQAPQQ) are disordered. Residues 26–37 (AGYPPAGYPPPG) are compositionally biased toward pro residues. The helical transmembrane segment at 59 to 76 (KQNAGMLEGCLAALCCCC) threads the bilayer.

Belongs to the CYSTM1 family. Homodimer and heterodimers. Interacts with CYSTM7, CYTSM3, CYTSM4, CYTSM5, CYTSM6, CYTSM9, CYTSM10 and CYTSM11. Binds weakly to CYSTM1 and CYSTM2. As to expression, expressed in root meristem, root vasculature, leaf vasculature and floral organ primordia. Mostly expressed in roots and flowers and, to a lower extent, in stems, siliques and leaves.

The protein resides in the cell membrane. Functionally, required for the promotion of megasporogenesis, or promotion of germ cell formation from somatic precursor cells. Acts redundantly with WIH2. Functions in a genetic pathway downstream of SPL/NZZ and WUS and together with TRN2 in promoting megasporogenesis. Involved in resistance to abiotic stress. The chain is Protein CYSTEINE-RICH TRANSMEMBRANE MODULE 13 from Arabidopsis thaliana (Mouse-ear cress).